The chain runs to 238 residues: uncharacterized protein (238 aa).

7 helical membrane passes run 22 to 42 (VYGW…GLYA), 49 to 69 (LFSL…YIQA), 78 to 98 (AVMG…GTMV), 105 to 125 (FGGG…GLSA), 141 to 161 (ILML…VVSL), 166 to 186 (PLMY…LTVV), and 208 to 228 (LSLI…WYLL).

This sequence belongs to the BI1 family.

It is found in the cell membrane. This is an uncharacterized protein from Chlamydia muridarum (strain MoPn / Nigg).